The following is a 529-amino-acid chain: Bifunctional purine biosynthesis protein PurH (529 aa).

Residues 1–148 (MNNARPIRRA…KNHKDTTIIV (148 aa)) form the MGS-like domain.

This sequence belongs to the PurH family.

The enzyme catalyses (6R)-10-formyltetrahydrofolate + 5-amino-1-(5-phospho-beta-D-ribosyl)imidazole-4-carboxamide = 5-formamido-1-(5-phospho-D-ribosyl)imidazole-4-carboxamide + (6S)-5,6,7,8-tetrahydrofolate. The catalysed reaction is IMP + H2O = 5-formamido-1-(5-phospho-D-ribosyl)imidazole-4-carboxamide. Its pathway is purine metabolism; IMP biosynthesis via de novo pathway; 5-formamido-1-(5-phospho-D-ribosyl)imidazole-4-carboxamide from 5-amino-1-(5-phospho-D-ribosyl)imidazole-4-carboxamide (10-formyl THF route): step 1/1. It functions in the pathway purine metabolism; IMP biosynthesis via de novo pathway; IMP from 5-formamido-1-(5-phospho-D-ribosyl)imidazole-4-carboxamide: step 1/1. This chain is Bifunctional purine biosynthesis protein PurH, found in Shewanella piezotolerans (strain WP3 / JCM 13877).